A 94-amino-acid chain; its full sequence is Small ribosomal subunit protein uS19 (94 aa).

It belongs to the universal ribosomal protein uS19 family.

Its function is as follows. Protein S19 forms a complex with S13 that binds strongly to the 16S ribosomal RNA. This chain is Small ribosomal subunit protein uS19, found in Desulforudis audaxviator (strain MP104C).